A 163-amino-acid polypeptide reads, in one-letter code: Sperm surface protein Sp17 (163 aa).

Disordered stretches follow at residues 57 to 115 (PAEW…EKEE) and 129 to 163 (VAREEVKKMKTDSLQNEEKEENSEDTGFTSRTHEK). Composition is skewed to basic and acidic residues over residues 62–98 (SKVEDRFYNNHAFEEQEPPEKSDPKQEESQVSGKEEE) and 129–139 (VAREEVKKMKT). The region spanning 114–143 (EEVAAVKIQAAFRGHVAREEVKKMKTDSLQ) is the IQ domain. Polar residues predominate over residues 153 to 163 (DTGFTSRTHEK).

Homodimer. May interact with ROPN1. In terms of tissue distribution, testis- and sperm-specific.

It localises to the membrane. Sperm surface zona pellucida binding protein. Helps to bind spermatozoa to the zona pellucida with high affinity. Might function in binding zona pellucida and carbohydrates. This Papio hamadryas (Hamadryas baboon) protein is Sperm surface protein Sp17 (SPA17).